The following is an 82-amino-acid chain: uncharacterized protein (82 aa).

This is an uncharacterized protein from Sinorhizobium fredii (strain NBRC 101917 / NGR234).